Here is a 549-residue protein sequence, read N- to C-terminus: Oxygen-dependent choline dehydrogenase (549 aa).

4-33 (DYIIIGSGSAGSALAHRLSEDSRNSVIVLE) serves as a coordination point for FAD. His465 functions as the Proton acceptor in the catalytic mechanism.

Belongs to the GMC oxidoreductase family. FAD serves as cofactor.

The enzyme catalyses choline + A = betaine aldehyde + AH2. The catalysed reaction is betaine aldehyde + NAD(+) + H2O = glycine betaine + NADH + 2 H(+). The protein operates within amine and polyamine biosynthesis; betaine biosynthesis via choline pathway; betaine aldehyde from choline (cytochrome c reductase route): step 1/1. Functionally, involved in the biosynthesis of the osmoprotectant glycine betaine. Catalyzes the oxidation of choline to betaine aldehyde and betaine aldehyde to glycine betaine at the same rate. This Sinorhizobium fredii (strain NBRC 101917 / NGR234) protein is Oxygen-dependent choline dehydrogenase.